A 149-amino-acid polypeptide reads, in one-letter code: Deoxyuridine 5'-triphosphate nucleotidohydrolase (149 aa).

Substrate-binding positions include 68-70 (RSG), Asn81, and 85-87 (LID).

Belongs to the dUTPase family. It depends on Mg(2+) as a cofactor.

It carries out the reaction dUTP + H2O = dUMP + diphosphate + H(+). The protein operates within pyrimidine metabolism; dUMP biosynthesis; dUMP from dCTP (dUTP route): step 2/2. Its function is as follows. This enzyme is involved in nucleotide metabolism: it produces dUMP, the immediate precursor of thymidine nucleotides and it decreases the intracellular concentration of dUTP so that uracil cannot be incorporated into DNA. The chain is Deoxyuridine 5'-triphosphate nucleotidohydrolase from Aromatoleum aromaticum (strain DSM 19018 / LMG 30748 / EbN1) (Azoarcus sp. (strain EbN1)).